The following is a 1556-amino-acid chain: Pentafunctional AROM polypeptide (1556 aa).

Positions 1 to 387 (MFAEGQIQKV…HEQKASSVAD (387 aa)) are 3-dehydroquinate synthase. Residues 46 to 48 (DTN), 84 to 87 (ETSK), 115 to 117 (GGV), and D120 each bind NAD(+). R131 is a binding site for 7-phospho-2-dehydro-3-deoxy-D-arabino-heptonate. NAD(+) is bound at residue 140–141 (TT). 7-phospho-2-dehydro-3-deoxy-D-arabino-heptonate contacts are provided by D147 and K153. K162 contacts NAD(+). N163 lines the 7-phospho-2-dehydro-3-deoxy-D-arabino-heptonate pocket. Residues 180-183 (FLET) and N191 contribute to the NAD(+) site. Position 195 (E195) interacts with Zn(2+). 7-phospho-2-dehydro-3-deoxy-D-arabino-heptonate is bound by residues 195 to 198 (EVIK) and K253. E263 serves as the catalytic Proton acceptor; for 3-dehydroquinate synthase activity. 7-phospho-2-dehydro-3-deoxy-D-arabino-heptonate-binding positions include 267 to 271 (RNLLN) and H274. H274 contacts Zn(2+). The active-site Proton acceptor; for 3-dehydroquinate synthase activity is the H278. 7-phospho-2-dehydro-3-deoxy-D-arabino-heptonate-binding residues include H290 and K359. H290 provides a ligand contact to Zn(2+). Residues 400 to 837 (VGEAPVGDKK…WDVLSGVFNV (438 aa)) are EPSP synthase. C819 serves as the catalytic For EPSP synthase activity. The tract at residues 858–1049 (PSIFIVGMRG…HKDQFTSFLS (192 aa)) is shikimate kinase. Position 864–871 (864–871 (GMRGAGKT)) interacts with ATP. The interval 1050-1266 (LTFPDVSIAA…AAPGQLSVEE (217 aa)) is 3-dehydroquinase. The Proton acceptor; for 3-dehydroquinate dehydratase activity role is filled by H1171. The Schiff-base intermediate with substrate; for 3-dehydroquinate dehydratase activity role is filled by K1200. Residues 1279–1556 (KNLSFFIVGT…EVGEKAVLGN (278 aa)) are shikimate dehydrogenase.

It in the N-terminal section; belongs to the sugar phosphate cyclases superfamily. Dehydroquinate synthase family. The protein in the 2nd section; belongs to the EPSP synthase family. This sequence in the 3rd section; belongs to the shikimate kinase family. In the 4th section; belongs to the type-I 3-dehydroquinase family. It in the C-terminal section; belongs to the shikimate dehydrogenase family. In terms of assembly, homodimer. Requires Zn(2+) as cofactor.

The protein localises to the cytoplasm. It carries out the reaction 7-phospho-2-dehydro-3-deoxy-D-arabino-heptonate = 3-dehydroquinate + phosphate. It catalyses the reaction 3-dehydroquinate = 3-dehydroshikimate + H2O. The enzyme catalyses shikimate + NADP(+) = 3-dehydroshikimate + NADPH + H(+). The catalysed reaction is shikimate + ATP = 3-phosphoshikimate + ADP + H(+). It carries out the reaction 3-phosphoshikimate + phosphoenolpyruvate = 5-O-(1-carboxyvinyl)-3-phosphoshikimate + phosphate. It participates in metabolic intermediate biosynthesis; chorismate biosynthesis; chorismate from D-erythrose 4-phosphate and phosphoenolpyruvate: step 2/7. Its pathway is metabolic intermediate biosynthesis; chorismate biosynthesis; chorismate from D-erythrose 4-phosphate and phosphoenolpyruvate: step 3/7. The protein operates within metabolic intermediate biosynthesis; chorismate biosynthesis; chorismate from D-erythrose 4-phosphate and phosphoenolpyruvate: step 4/7. It functions in the pathway metabolic intermediate biosynthesis; chorismate biosynthesis; chorismate from D-erythrose 4-phosphate and phosphoenolpyruvate: step 5/7. It participates in metabolic intermediate biosynthesis; chorismate biosynthesis; chorismate from D-erythrose 4-phosphate and phosphoenolpyruvate: step 6/7. Functionally, the AROM polypeptide catalyzes 5 consecutive enzymatic reactions in prechorismate polyaromatic amino acid biosynthesis. In Yarrowia lipolytica (strain CLIB 122 / E 150) (Yeast), this protein is Pentafunctional AROM polypeptide.